The primary structure comprises 509 residues: ATP synthase subunit alpha (509 aa).

169–176 (GDRQTGKT) contributes to the ATP binding site.

It belongs to the ATPase alpha/beta chains family. F-type ATPases have 2 components, CF(1) - the catalytic core - and CF(0) - the membrane proton channel. CF(1) has five subunits: alpha(3), beta(3), gamma(1), delta(1), epsilon(1). CF(0) has three main subunits: a(1), b(2) and c(9-12). The alpha and beta chains form an alternating ring which encloses part of the gamma chain. CF(1) is attached to CF(0) by a central stalk formed by the gamma and epsilon chains, while a peripheral stalk is formed by the delta and b chains.

The protein resides in the cell inner membrane. It catalyses the reaction ATP + H2O + 4 H(+)(in) = ADP + phosphate + 5 H(+)(out). Functionally, produces ATP from ADP in the presence of a proton gradient across the membrane. The alpha chain is a regulatory subunit. The polypeptide is ATP synthase subunit alpha (Brucella anthropi (strain ATCC 49188 / DSM 6882 / CCUG 24695 / JCM 21032 / LMG 3331 / NBRC 15819 / NCTC 12168 / Alc 37) (Ochrobactrum anthropi)).